A 339-amino-acid chain; its full sequence is Serine/threonine-protein kinase SAPK2 (339 aa).

The 257-residue stretch at 4 to 260 (YEVIKDIGSG…IPEIKNHPWF (257 aa)) folds into the Protein kinase domain. ATP is bound by residues 10-18 (IGSGNFGVA) and K33. D123 functions as the Proton acceptor in the catalytic mechanism. The tract at residues 253-339 (EIKNHPWFLK…EDSGDFVCAL (87 aa)) is C-terminal.

Belongs to the protein kinase superfamily. Ser/Thr protein kinase family. As to quaternary structure, interacts with BZIP46. Interacts with ABI5 and PP2C30. Interacts with PP2C51. Post-translationally, phosphorylated. In terms of tissue distribution, expressed in leaf blades, leaf sheaths and roots. Expressed in shoots and roots of young seedlings.

It is found in the cytoplasm. Its subcellular location is the nucleus. It catalyses the reaction L-seryl-[protein] + ATP = O-phospho-L-seryl-[protein] + ADP + H(+). The enzyme catalyses L-threonyl-[protein] + ATP = O-phospho-L-threonyl-[protein] + ADP + H(+). Its activity is regulated as follows. Activated by phosphorylation in response to hyperosmotic stress within 5 minutes. Functionally, may play a role in signal transduction of hyperosmotic response. Can phosphorylate BZIP46 in vitro. Together with ABI5, PP2C30 and PYL5, is part of an abscisic acid (ABA) signaling unit that modulates seed germination and early seedling growth. The protein is Serine/threonine-protein kinase SAPK2 (SAPK2) of Oryza sativa subsp. japonica (Rice).